Here is a 106-residue protein sequence, read N- to C-terminus: MSTAIAQQKIRIRLKAFDRRMLDLSCDKIIETADNTAATAIGPIPLPTKRKIYCVLRSPHVDKDSREHFETRTHRRIIDIYNPSAKTIDALMKLDLPSGVDIEVKL.

Belongs to the universal ribosomal protein uS10 family. In terms of assembly, part of the 30S ribosomal subunit.

In terms of biological role, involved in the binding of tRNA to the ribosomes. This Prochlorococcus marinus (strain MIT 9211) protein is Small ribosomal subunit protein uS10.